The chain runs to 95 residues: Defensin alpha 4 (95 aa).

The signal sequence occupies residues 1 to 19 (MRTLALLAAILLVALQAQA). Positions 20–62 (EHISVSIDEVVDQQPPQAEDQDVAIYVKEHESSALEALGVKAG) are excised as a propeptide. 3 cysteine pairs are disulfide-bonded: Cys-65/Cys-93, Cys-67/Cys-82, and Cys-72/Cys-92.

This sequence belongs to the alpha-defensin family.

The protein localises to the secreted. In terms of biological role, host-defense peptide that has antimicrobial activity. Inhibits corticotropin (ACTH)-stimulated corticosterone production (in vitro). This is Defensin alpha 4 from Oryctolagus cuniculus (Rabbit).